The chain runs to 418 residues: Zinc metalloproteinase-disintegrin-like batroxstatin-2 (418 aa).

One can recognise a Peptidase M12B domain in the interval 10 to 206 (KYVKLVLVAD…DMPQCILEKP (197 aa)). 3 cysteine pairs are disulfide-bonded: Cys121/Cys201, Cys161/Cys185, and Cys163/Cys168. A Zn(2+)-binding site is contributed by His146. Glu147 is a catalytic residue. Zn(2+) is bound by residues His150 and His156. In terms of domain architecture, Disintegrin spans 214-299 (PPVCGNYFVE…AECTDRFQRN (86 aa)). Ca(2+) is bound by residues Val216, Asn219, Phe221, Glu223, Glu226, and Asp229. 14 disulfide bridges follow: Cys217-Cys246, Cys228-Cys241, Cys230-Cys236, Cys240-Cys263, Cys254-Cys260, Cys259-Cys285, Cys272-Cys292, Cys279-Cys310, Cys303-Cys315, Cys322-Cys372, Cys337-Cys383, Cys350-Cys360, Cys367-Cys409, and Cys403-Cys414. The short motif at 278–280 (ECD) is the D/ECD-tripeptide element. Asp280, Met281, Asp283, Asp294, and Arg295 together coordinate Ca(2+). N-linked (GlcNAc...) asparagine glycosylation occurs at Asn312.

This sequence belongs to the venom metalloproteinase (M12B) family. P-III subfamily. P-IIIc sub-subfamily. In terms of assembly, homodimer; disulfide-linked. The cofactor is Zn(2+). In terms of tissue distribution, expressed by the venom gland.

The protein localises to the secreted. Snake venom zinc metalloprotease that induces apoptosis in vascular endothelial cells (VEC), without degrading the extracellular matrix (it cannot cleave collagen) or inhibiting adhesion of VEC. Has also fibrinogenolytic and hemorrhagic activities. In Bothrops atrox (Barba amarilla), this protein is Zinc metalloproteinase-disintegrin-like batroxstatin-2.